The chain runs to 213 residues: Heavy metal-binding protein HIP (213 aa).

A C1q domain is found at 80–213 (FKSHHVAFSA…MSTFTGFMLH (134 aa)).

In terms of tissue distribution, pallium, gill and liver.

Its subcellular location is the secreted. Its function is as follows. Binds heavy metals. May function as a carrier of divalent cations in plasma. In Mytilus edulis (Blue mussel), this protein is Heavy metal-binding protein HIP.